The sequence spans 600 residues: Elongation factor 4 (600 aa).

The tr-type G domain occupies 4 to 186; sequence SKIRNFSIIA…AIVNKIPAPY (183 aa). GTP contacts are provided by residues 16-21 and 133-136; these read DHGKST and NKVD.

Belongs to the TRAFAC class translation factor GTPase superfamily. Classic translation factor GTPase family. LepA subfamily.

Its subcellular location is the cell membrane. The enzyme catalyses GTP + H2O = GDP + phosphate + H(+). In terms of biological role, required for accurate and efficient protein synthesis under certain stress conditions. May act as a fidelity factor of the translation reaction, by catalyzing a one-codon backward translocation of tRNAs on improperly translocated ribosomes. Back-translocation proceeds from a post-translocation (POST) complex to a pre-translocation (PRE) complex, thus giving elongation factor G a second chance to translocate the tRNAs correctly. Binds to ribosomes in a GTP-dependent manner. The protein is Elongation factor 4 of Mesoplasma florum (strain ATCC 33453 / NBRC 100688 / NCTC 11704 / L1) (Acholeplasma florum).